Reading from the N-terminus, the 478-residue chain is Putative multidrug resistance outer membrane protein MdtQ (478 aa).

The N-terminal stretch at methionine 1–glycine 21 is a signal peptide. Cysteine 22 carries N-palmitoyl cysteine lipidation. Residue cysteine 22 is the site of S-diacylglycerol cysteine attachment.

This sequence belongs to the outer membrane factor (OMF) (TC 1.B.17) family.

It localises to the cell outer membrane. Could be involved in resistance to puromycin, acriflavine and tetraphenylarsonium chloride. This chain is Putative multidrug resistance outer membrane protein MdtQ (mdtQ), found in Escherichia coli (strain K12).